The following is a 149-amino-acid chain: Large ribosomal subunit protein uL13 (149 aa).

The protein belongs to the universal ribosomal protein uL13 family. Part of the 50S ribosomal subunit.

Its function is as follows. This protein is one of the early assembly proteins of the 50S ribosomal subunit, although it is not seen to bind rRNA by itself. It is important during the early stages of 50S assembly. This Chlorobium chlorochromatii (strain CaD3) protein is Large ribosomal subunit protein uL13.